Reading from the N-terminus, the 129-residue chain is Sulfurtransferase TusD (129 aa).

Cysteine 79 acts as the Cysteine persulfide intermediate in catalysis.

The protein belongs to the DsrE/TusD family. As to quaternary structure, heterohexamer, formed by a dimer of trimers. The hexameric TusBCD complex contains 2 copies each of TusB, TusC and TusD. The TusBCD complex interacts with TusE.

It localises to the cytoplasm. Part of a sulfur-relay system required for 2-thiolation of 5-methylaminomethyl-2-thiouridine (mnm(5)s(2)U) at tRNA wobble positions. Accepts sulfur from TusA and transfers it in turn to TusE. The protein is Sulfurtransferase TusD of Pectobacterium atrosepticum (strain SCRI 1043 / ATCC BAA-672) (Erwinia carotovora subsp. atroseptica).